We begin with the raw amino-acid sequence, 203 residues long: ESCRT-related protein CHMP1B (203 aa).

Coiled-coil stretches lie at residues 13 to 51 (DLKFTSKSLQRQSRKCEKEEKAEKLKVKKAIEKGNMDGA) and 109 to 140 (GNLQKMSETMDSFEKQFVNMEVQAEFMENAMA). The disordered stretch occupies residues 172-203 (PQPAGHAIPTKTEEKVDEDDLSRRLAELKARG). Over residues 192–203 (LSRRLAELKARG) the composition is skewed to basic and acidic residues.

It belongs to the SNF7 family. Interacts with CHMP1A and LIP5. Interacts with VPS2.2.

The protein resides in the cytoplasm. Its subcellular location is the endosome membrane. In terms of biological role, involved in ESCRT-dependent multivesicular body (MVB) formation and sorting of endosomal cargo proteins into MVBs. Mediates the MVB sorting of the auxin carriers PIN1, PIN2 and AUX1. Required for embryonic axis establishment and seedling growth. Required for autophagic degradation of plastid proteins. Promotes the efficient sequestration of cargo from plastids into autophagosomes. Mediates the efficient delivery of autophagic plastid bodies to the vacuole, but not into the cytoplasm. In Arabidopsis thaliana (Mouse-ear cress), this protein is ESCRT-related protein CHMP1B.